We begin with the raw amino-acid sequence, 95 residues long: DNA-directed RNA polymerase subunit Rpo11 (95 aa).

It belongs to the archaeal Rpo11/eukaryotic RPB11/RPC19 RNA polymerase subunit family. Part of the RNA polymerase complex.

The protein localises to the cytoplasm. The enzyme catalyses RNA(n) + a ribonucleoside 5'-triphosphate = RNA(n+1) + diphosphate. Its function is as follows. DNA-dependent RNA polymerase (RNAP) catalyzes the transcription of DNA into RNA using the four ribonucleoside triphosphates as substrates. This Pyrococcus abyssi (strain GE5 / Orsay) protein is DNA-directed RNA polymerase subunit Rpo11.